The sequence spans 165 residues: Nucleotide-binding protein P9301_05061 (165 aa).

Belongs to the YajQ family.

Functionally, nucleotide-binding protein. This chain is Nucleotide-binding protein P9301_05061, found in Prochlorococcus marinus (strain MIT 9301).